Consider the following 115-residue polypeptide: Ribosome-binding factor A (115 aa).

It belongs to the RbfA family. Monomer. Binds 30S ribosomal subunits, but not 50S ribosomal subunits or 70S ribosomes.

The protein localises to the cytoplasm. Functionally, one of several proteins that assist in the late maturation steps of the functional core of the 30S ribosomal subunit. Associates with free 30S ribosomal subunits (but not with 30S subunits that are part of 70S ribosomes or polysomes). Required for efficient processing of 16S rRNA. May interact with the 5'-terminal helix region of 16S rRNA. The protein is Ribosome-binding factor A of Streptococcus gordonii (strain Challis / ATCC 35105 / BCRC 15272 / CH1 / DL1 / V288).